Reading from the N-terminus, the 1435-residue chain is Gag-Pol polyprotein (1435 aa).

G2 carries N-myristoyl glycine; by host lipidation. The interaction with Gp41 stretch occupies residues 7–31; sequence VLSGGELDRWEKIRLRPGGKKKYKL. The segment at 8 to 43 is interaction with host CALM1; it reads LSGGELDRWEKIRLRPGGKKKYKLKHIVWASRELER. An interaction with host AP3D1 region spans residues 12 to 19; it reads ELDRWEKI. Positions 14 to 33 are interaction with membrane phosphatidylinositol 4,5-bisphosphate and RNA; it reads DRWEKIRLRPGGKKKYKLKH. The short motif at 16–22 is the Nuclear export signal element; it reads WEKIRLR. The short motif at 26–32 is the Nuclear localization signal element; it reads KKKYKLK. An interaction with membrane phosphatidylinositol 4,5-bisphosphate region spans residues 73-77; the sequence is EELRS. Residues 106–128 are disordered; sequence EEQNKSKKKAQQAAADTGHSNQV. At Y132 the chain carries Phosphotyrosine; by host. An interaction with host PPIA/CYPA and NUP153 region spans residues 189 to 227; the sequence is NTVGGHQAAMQMLKETINEEAAEWDRVHPVHAGPIAPGQ. Positions 217–225 are PPIA/CYPA-binding loop; it reads PVHAGPIAP. Residues 277 to 363 form a dimerization/Multimerization of capsid protein p24 region; the sequence is YSPTSILDIR…GGPGHKARVL (87 aa). 2 consecutive CCHC-type zinc fingers follow at residues 390-407 and 411-428; these read VKCF…NCRA and KGCW…DCTE. The interval 448–481 is disordered; the sequence is FSSEQTRANSPTRRELQVWGRDNNSPSEAGADRQ. The tract at residues 489-493 is dimerization of protease; it reads PQVTL. A Peptidase A2 domain is found at 508–577; the sequence is KEALLDTGAD…TPVNIIGRNL (70 aa). D513 acts as the For protease activity; shared with dimeric partner in catalysis. Dimerization of protease regions lie at residues 537 to 543 and 576 to 588; these read GIGGFIK and NLLT…LNFP. The Reverse transcriptase domain maps to 631 to 821; sequence EGKISKIGPE…PPFLWMGYEL (191 aa). 3 residues coordinate Mg(2+): D697, D772, and D773. Residues 814-822 are RT 'primer grip'; the sequence is FLWMGYELH. Positions 985–1001 match the Tryptophan repeat motif motif; the sequence is WETWWTEYWQATWIPEW. The RNase H type-1 domain maps to 1021–1144; sequence IVGAETFYVD…VDKLVSAGIR (124 aa). Positions 1030, 1065, 1085, and 1136 each coordinate Mg(2+). Residues 1150 to 1191 form an Integrase-type zinc finger; that stretch reads DGIDKAQDEHEKYHSNWRAMASDFNLPPVVAKEIVASCDKCQ. Residues H1159, H1163, C1187, and C1190 each coordinate Zn(2+). Residues 1201–1351 form the Integrase catalytic domain; sequence VDCSPGIWQL…SAGERIVDII (151 aa). The Mg(2+) site is built by D1211, D1263, and E1299. The segment at residues 1370–1417 is a DNA-binding region (integrase-type); that stretch reads FRVYYRDSRNPLWKGPAKLLWKGEGAVVIQDNSDIKVVPRRKAKIIRD.

In terms of assembly, homotrimer; further assembles as hexamers of trimers. Interacts with gp41 (via C-terminus). Interacts with host CALM1; this interaction induces a conformational change in the Matrix protein, triggering exposure of the myristate group. Interacts with host AP3D1; this interaction allows the polyprotein trafficking to multivesicular bodies during virus assembly. Part of the pre-integration complex (PIC) which is composed of viral genome, matrix protein, Vpr and integrase. As to quaternary structure, homodimer; the homodimer further multimerizes as homohexamers or homopentamers. Interacts with human PPIA/CYPA; this interaction stabilizes the capsid. Interacts with human NUP153. Interacts with host PDZD8; this interaction stabilizes the capsid. Interacts with monkey TRIM5; this interaction destabilizes the capsid. Homodimer, whose active site consists of two apposed aspartic acid residues. In terms of assembly, heterodimer of p66 RT and p51 RT (RT p66/p51). Heterodimerization of RT is essential for DNA polymerase activity. The overall folding of the subdomains is similar in p66 RT and p51 RT but the spatial arrangements of the subdomains are dramatically different. As to quaternary structure, homotetramer; may further associate as a homohexadecamer. Part of the pre-integration complex (PIC) which is composed of viral genome, matrix protein, Vpr and integrase. Interacts with human SMARCB1/INI1 and human PSIP1/LEDGF isoform 1. Interacts with human KPNA3; this interaction might play a role in nuclear import of the pre-. integration complex. Interacts with human NUP153; this interaction might play a role in nuclear import of the pre-integration complex. Mg(2+) is required as a cofactor. Specific enzymatic cleavages by the viral protease yield mature proteins. The protease is released by autocatalytic cleavage. The polyprotein is cleaved during and after budding, this process is termed maturation. Proteolytic cleavage of p66 RT removes the RNase H domain to yield the p51 RT subunit. Nucleocapsid protein p7 might be further cleaved after virus entry. Post-translationally, tyrosine phosphorylated presumably in the virion by a host kinase. Phosphorylation is apparently not a major regulator of membrane association. In terms of processing, phosphorylated possibly by host MAPK1; this phosphorylation is necessary for Pin1-mediated virion uncoating. Methylated by host PRMT6, impairing its function by reducing RNA annealing and the initiation of reverse transcription.

The protein localises to the host cell membrane. Its subcellular location is the host endosome. It localises to the host multivesicular body. It is found in the virion membrane. The protein resides in the host nucleus. The protein localises to the host cytoplasm. Its subcellular location is the virion. It carries out the reaction Specific for a P1 residue that is hydrophobic, and P1' variable, but often Pro.. It catalyses the reaction Endohydrolysis of RNA in RNA/DNA hybrids. Three different cleavage modes: 1. sequence-specific internal cleavage of RNA. Human immunodeficiency virus type 1 and Moloney murine leukemia virus enzymes prefer to cleave the RNA strand one nucleotide away from the RNA-DNA junction. 2. RNA 5'-end directed cleavage 13-19 nucleotides from the RNA end. 3. DNA 3'-end directed cleavage 15-20 nucleotides away from the primer terminus.. The catalysed reaction is 3'-end directed exonucleolytic cleavage of viral RNA-DNA hybrid.. The enzyme catalyses DNA(n) + a 2'-deoxyribonucleoside 5'-triphosphate = DNA(n+1) + diphosphate. With respect to regulation, protease: The viral protease is inhibited by many synthetic protease inhibitors (PIs), such as amprenavir, atazanavir, indinavir, loprinavir, nelfinavir, ritonavir and saquinavir. Use of protease inhibitors in tritherapy regimens permit more ambitious therapeutic strategies. Reverse transcriptase/ribonuclease H: RT can be inhibited either by nucleoside RT inhibitors (NRTIs) or by non nucleoside RT inhibitors (NNRTIs). NRTIs act as chain terminators, whereas NNRTIs inhibit DNA polymerization by binding a small hydrophobic pocket near the RT active site and inducing an allosteric change in this region. Classical NRTIs are abacavir, adefovir (PMEA), didanosine (ddI), lamivudine (3TC), stavudine (d4T), tenofovir (PMPA), zalcitabine (ddC), and zidovudine (AZT). Classical NNRTIs are atevirdine (BHAP U-87201E), delavirdine, efavirenz (DMP-266), emivirine (I-EBU), and nevirapine (BI-RG-587). The tritherapies used as a basic effective treatment of AIDS associate two NRTIs and one NNRTI. Its function is as follows. Mediates, with Gag polyprotein, the essential events in virion assembly, including binding the plasma membrane, making the protein-protein interactions necessary to create spherical particles, recruiting the viral Env proteins, and packaging the genomic RNA via direct interactions with the RNA packaging sequence (Psi). Gag-Pol polyprotein may regulate its own translation, by the binding genomic RNA in the 5'-UTR. At low concentration, the polyprotein would promote translation, whereas at high concentration, the polyprotein would encapsidate genomic RNA and then shut off translation. Functionally, targets the polyprotein to the plasma membrane via a multipartite membrane-binding signal, that includes its myristoylated N-terminus. Matrix protein is part of the pre-integration complex. Implicated in the release from host cell mediated by Vpu. Binds to RNA. In terms of biological role, forms the conical core that encapsulates the genomic RNA-nucleocapsid complex in the virion. Most core are conical, with only 7% tubular. The core is constituted by capsid protein hexamer subunits. The core is disassembled soon after virion entry. Host restriction factors such as monkey TRIM5-alpha or TRIMCyp bind retroviral capsids and cause premature capsid disassembly, leading to blocks in reverse transcription. Capsid restriction by TRIM5 is one of the factors which restricts HIV-1 to the human species. Host PIN1 apparently facilitates the virion uncoating. On the other hand, interactions with PDZD8 or CYPA stabilize the capsid. Encapsulates and protects viral dimeric unspliced genomic RNA (gRNA). Binds these RNAs through its zinc fingers. Acts as a nucleic acid chaperone which is involved in rearangement of nucleic acid secondary structure during gRNA retrotranscription. Also facilitates template switch leading to recombination. As part of the polyprotein, participates in gRNA dimerization, packaging, tRNA incorporation and virion assembly. Its function is as follows. Aspartyl protease that mediates proteolytic cleavages of Gag and Gag-Pol polyproteins during or shortly after the release of the virion from the plasma membrane. Cleavages take place as an ordered, step-wise cascade to yield mature proteins. This process is called maturation. Displays maximal activity during the budding process just prior to particle release from the cell. Also cleaves Nef and Vif, probably concomitantly with viral structural proteins on maturation of virus particles. Hydrolyzes host EIF4GI and PABP1 in order to shut off the capped cellular mRNA translation. The resulting inhibition of cellular protein synthesis serves to ensure maximal viral gene expression and to evade host immune response. Also mediates cleavage of host YTHDF3. Mediates cleavage of host CARD8, thereby activating the CARD8 inflammasome, leading to the clearance of latent HIV-1 in patient CD4(+) T-cells after viral reactivation; in contrast, HIV-1 can evade CARD8-sensing when its protease remains inactive in infected cells prior to viral budding. Functionally, multifunctional enzyme that converts the viral RNA genome into dsDNA in the cytoplasm, shortly after virus entry into the cell. This enzyme displays a DNA polymerase activity that can copy either DNA or RNA templates, and a ribonuclease H (RNase H) activity that cleaves the RNA strand of RNA-DNA heteroduplexes in a partially processive 3' to 5' endonucleasic mode. Conversion of viral genomic RNA into dsDNA requires many steps. A tRNA(3)-Lys binds to the primer-binding site (PBS) situated at the 5'-end of the viral RNA. RT uses the 3' end of the tRNA primer to perform a short round of RNA-dependent minus-strand DNA synthesis. The reading proceeds through the U5 region and ends after the repeated (R) region which is present at both ends of viral RNA. The portion of the RNA-DNA heteroduplex is digested by the RNase H, resulting in a ssDNA product attached to the tRNA primer. This ssDNA/tRNA hybridizes with the identical R region situated at the 3' end of viral RNA. This template exchange, known as minus-strand DNA strong stop transfer, can be either intra- or intermolecular. RT uses the 3' end of this newly synthesized short ssDNA to perform the RNA-dependent minus-strand DNA synthesis of the whole template. RNase H digests the RNA template except for two polypurine tracts (PPTs) situated at the 5'-end and near the center of the genome. It is not clear if both polymerase and RNase H activities are simultaneous. RNase H probably can proceed both in a polymerase-dependent (RNA cut into small fragments by the same RT performing DNA synthesis) and a polymerase-independent mode (cleavage of remaining RNA fragments by free RTs). Secondly, RT performs DNA-directed plus-strand DNA synthesis using the PPTs that have not been removed by RNase H as primers. PPTs and tRNA primers are then removed by RNase H. The 3' and 5' ssDNA PBS regions hybridize to form a circular dsDNA intermediate. Strand displacement synthesis by RT to the PBS and PPT ends produces a blunt ended, linear dsDNA copy of the viral genome that includes long terminal repeats (LTRs) at both ends. In terms of biological role, catalyzes viral DNA integration into the host chromosome, by performing a series of DNA cutting and joining reactions. This enzyme activity takes place after virion entry into a cell and reverse transcription of the RNA genome in dsDNA. The first step in the integration process is 3' processing. This step requires a complex comprising the viral genome, matrix protein, Vpr and integrase. This complex is called the pre-integration complex (PIC). The integrase protein removes 2 nucleotides from each 3' end of the viral DNA, leaving recessed CA OH's at the 3' ends. In the second step, the PIC enters cell nucleus. This process is mediated through integrase and Vpr proteins, and allows the virus to infect a non dividing cell. This ability to enter the nucleus is specific of lentiviruses, other retroviruses cannot and rely on cell division to access cell chromosomes. In the third step, termed strand transfer, the integrase protein joins the previously processed 3' ends to the 5' ends of strands of target cellular DNA at the site of integration. The 5'-ends are produced by integrase-catalyzed staggered cuts, 5 bp apart. A Y-shaped, gapped, recombination intermediate results, with the 5'-ends of the viral DNA strands and the 3' ends of target DNA strands remaining unjoined, flanking a gap of 5 bp. The last step is viral DNA integration into host chromosome. This involves host DNA repair synthesis in which the 5 bp gaps between the unjoined strands are filled in and then ligated. Since this process occurs at both cuts flanking the HIV genome, a 5 bp duplication of host DNA is produced at the ends of HIV-1 integration. Alternatively, Integrase may catalyze the excision of viral DNA just after strand transfer, this is termed disintegration. The sequence is that of Gag-Pol polyprotein (gag-pol) from Human immunodeficiency virus type 1 group M subtype B (isolate HXB2) (HIV-1).